The sequence spans 291 residues: Bis(5'-nucleosyl)-tetraphosphatase, symmetrical (291 aa).

The protein belongs to the Ap4A hydrolase family.

It carries out the reaction P(1),P(4)-bis(5'-adenosyl) tetraphosphate + H2O = 2 ADP + 2 H(+). Hydrolyzes diadenosine 5',5'''-P1,P4-tetraphosphate to yield ADP. This is Bis(5'-nucleosyl)-tetraphosphatase, symmetrical from Pseudomonas syringae pv. syringae (strain B728a).